The following is a 40-amino-acid chain: Photosystem II reaction center protein J (40 aa).

A helical membrane pass occupies residues 10-30 (LWLIGTVAGILVIGLVGIFFY).

The protein belongs to the PsbJ family. As to quaternary structure, PSII is composed of 1 copy each of membrane proteins PsbA, PsbB, PsbC, PsbD, PsbE, PsbF, PsbH, PsbI, PsbJ, PsbK, PsbL, PsbM, PsbT, PsbX, PsbY, PsbZ, Psb30/Ycf12, at least 3 peripheral proteins of the oxygen-evolving complex and a large number of cofactors. It forms dimeric complexes.

It is found in the plastid. The protein resides in the chloroplast thylakoid membrane. One of the components of the core complex of photosystem II (PSII). PSII is a light-driven water:plastoquinone oxidoreductase that uses light energy to abstract electrons from H(2)O, generating O(2) and a proton gradient subsequently used for ATP formation. It consists of a core antenna complex that captures photons, and an electron transfer chain that converts photonic excitation into a charge separation. This is Photosystem II reaction center protein J from Marchantia polymorpha (Common liverwort).